The following is a 298-amino-acid chain: ER-bound oxygenase mpaB (298 aa).

Residues methionine 1 to methionine 24 lie on the Lumenal side of the membrane. The helical transmembrane segment at proline 25–leucine 45 threads the bilayer. The Cytoplasmic portion of the chain corresponds to arginine 46–glutamate 298.

Belongs to the mpaB oxygenase family.

Its subcellular location is the endoplasmic reticulum membrane. The catalysed reaction is 4-farnesyl-3,5-dihydroxy-6-methylphthalide + AH2 + 2 O2 = (4E,8E)-10-(4,6-dihydroxy-7-methyl-3-oxo-1,3-dihydro-2-benzofuran-5-yl)-4,8-dimethyldeca-4,8-dienoate + acetone + A + H2O + H(+). Its pathway is secondary metabolite biosynthesis; terpenoid biosynthesis. Functionally, ER-bound oxygenase; part of the gene cluster that mediates the biosynthesis of mycophenolic acid (MPA), the first isolated antibiotic natural product in the world obtained from a culture of Penicillium brevicompactum in 1893. MpaB catalyzes the oxidative cleavage the C19-C20 double bond in farnesyl-DHMP (FDHMP) to yield FDHMP-3C via a mycophenolic aldehyde intermediate. The first step of the pathway is the synthesis of 5-methylorsellinic acid (5MOA) by the cytosolic polyketide synthase mpaC. 5MOA is then converted to the phthalide compound 5,7-dihydroxy-4,6-dimethylphthalide (DHMP) by the endoplasmic reticulum-bound cytochrome P450 monooxygenase mpaDE. MpaDE first catalyzes hydroxylation of 5-MOA to 4,6-dihydroxy-2-(hydroxymethyl)-3-methylbenzoic acid (DHMB). MpaDE then acts as a lactone synthase that catalyzes the ring closure to convert DHMB into DHMP. The next step is the prenylation of DHMP by the Golgi apparatus-associated prenyltransferase mpaA to yield farnesyl-DHMP (FDHMP). The ER-bound oxygenase mpaB then mediates the oxidative cleavage the C19-C20 double bond in FDHMP to yield FDHMP-3C via a mycophenolic aldehyde intermediate. The O-methyltransferase mpaG catalyzes the methylation of FDHMP-3C to yield MFDHMP-3C. After the cytosolic methylation of FDHMP-3C, MFDHMP-3C enters into peroxisomes probably via free diffusion due to its low molecular weight. Upon a peroxisomal CoA ligation reaction, catalyzed by a beta-oxidation component enzyme acyl-CoA ligase ACL891, MFDHMP-3C-CoA would then be restricted to peroxisomes for the following beta-oxidation pathway steps. The peroxisomal beta-oxidation machinery than converts MFDHMP-3C-CoA into MPA_CoA, via a beta-oxidation chain-shortening process. Finally mpaH acts as a peroxisomal acyl-CoA hydrolase with high substrate specificity toward MPA-CoA to release the final product MPA. This chain is ER-bound oxygenase mpaB, found in Penicillium roqueforti (strain FM164).